Here is a 372-residue protein sequence, read N- to C-terminus: Alanine racemase (372 aa).

Lysine 36 serves as the catalytic Proton acceptor; specific for D-alanine. Lysine 36 carries the post-translational modification N6-(pyridoxal phosphate)lysine. A substrate-binding site is contributed by arginine 134. The active-site Proton acceptor; specific for L-alanine is tyrosine 266. Methionine 314 is a substrate binding site.

Belongs to the alanine racemase family. Pyridoxal 5'-phosphate serves as cofactor.

The catalysed reaction is L-alanine = D-alanine. Its pathway is amino-acid biosynthesis; D-alanine biosynthesis; D-alanine from L-alanine: step 1/1. Catalyzes the interconversion of L-alanine and D-alanine. May also act on other amino acids. This is Alanine racemase (alr) from Nitratidesulfovibrio vulgaris (strain DSM 19637 / Miyazaki F) (Desulfovibrio vulgaris).